The sequence spans 143 residues: Large ribosomal subunit protein uL11 (143 aa).

It belongs to the universal ribosomal protein uL11 family. As to quaternary structure, part of the ribosomal stalk of the 50S ribosomal subunit. Interacts with L10 and the large rRNA to form the base of the stalk. L10 forms an elongated spine to which L12 dimers bind in a sequential fashion forming a multimeric L10(L12)X complex. In terms of processing, one or more lysine residues are methylated.

Forms part of the ribosomal stalk which helps the ribosome interact with GTP-bound translation factors. This is Large ribosomal subunit protein uL11 from Pseudomonas paraeruginosa (strain DSM 24068 / PA7) (Pseudomonas aeruginosa (strain PA7)).